Here is a 602-residue protein sequence, read N- to C-terminus: Elongation factor 4 (602 aa).

A tr-type G domain is found at 6–188; sequence DRIRNFCIIA…RIVTRIPPPG (183 aa). GTP-binding positions include 18–23 and 135–138; these read DHGKST and NKID.

The protein belongs to the TRAFAC class translation factor GTPase superfamily. Classic translation factor GTPase family. LepA subfamily.

The protein localises to the cell membrane. The catalysed reaction is GTP + H2O = GDP + phosphate + H(+). Functionally, required for accurate and efficient protein synthesis under certain stress conditions. May act as a fidelity factor of the translation reaction, by catalyzing a one-codon backward translocation of tRNAs on improperly translocated ribosomes. Back-translocation proceeds from a post-translocation (POST) complex to a pre-translocation (PRE) complex, thus giving elongation factor G a second chance to translocate the tRNAs correctly. Binds to ribosomes in a GTP-dependent manner. The protein is Elongation factor 4 of Pelotomaculum thermopropionicum (strain DSM 13744 / JCM 10971 / SI).